A 147-amino-acid chain; its full sequence is Large ribosomal subunit protein uL15 (147 aa).

The tract at residues 1–47 is disordered; it reads MKLHELKPAEGAVRAKRRLGRGTATGQGKTAGRGQKGQWSRSGGGVR. Over residues 23–35 the composition is skewed to gly residues; sequence TATGQGKTAGRGQ.

Belongs to the universal ribosomal protein uL15 family. As to quaternary structure, part of the 50S ribosomal subunit.

Functionally, binds to the 23S rRNA. The chain is Large ribosomal subunit protein uL15 from Clostridioides difficile (strain 630) (Peptoclostridium difficile).